A 317-amino-acid chain; its full sequence is NAD kinase (317 aa).

The Proton acceptor role is filled by aspartate 82. NAD(+) contacts are provided by residues 82 to 83 (DG), arginine 87, 157 to 158 (NE), aspartate 187, and 198 to 203 (TAYAFS).

The protein belongs to the NAD kinase family. The cofactor is a divalent metal cation.

It is found in the cytoplasm. The catalysed reaction is NAD(+) + ATP = ADP + NADP(+) + H(+). Its function is as follows. Involved in the regulation of the intracellular balance of NAD and NADP, and is a key enzyme in the biosynthesis of NADP. Catalyzes specifically the phosphorylation on 2'-hydroxyl of the adenosine moiety of NAD to yield NADP. This is NAD kinase from Corynebacterium diphtheriae (strain ATCC 700971 / NCTC 13129 / Biotype gravis).